Here is a 136-residue protein sequence, read N- to C-terminus: Lymphocyte antigen 6E (136 aa).

Residues 1 to 26 form the signal peptide; it reads MSATSNMRVFLPVLLAALLGMEQVHS. In terms of domain architecture, UPAR/Ly6 spans 27-118; the sequence is LMCFSCTDQK…AGLGLRASIP (92 aa). Cystine bridges form between cysteine 29–cysteine 54, cysteine 32–cysteine 41, cysteine 47–cysteine 76, cysteine 80–cysteine 98, and cysteine 99–cysteine 104. A glycan (N-linked (GlcNAc...) asparagine) is linked at asparagine 105. Alanine 108 carries the GPI-anchor amidated alanine lipid modification. Positions 109–136 are cleaved as a propeptide — removed in mature form; sequence AGLGLRASIPLLGLGLLLSLLALLQLSP.

As to quaternary structure, interacts with CHRNA4. Interacts with CD3Z/CD247. In terms of tissue distribution, ubiquitously expressed in mouse adult tissues with maximal expression in the lung and the salivary gland. Expression is strikingly lower in the fetal tissues except for the placenta. Present in thymus where its expression is observed in immature thymocytes and thymic stromal cells. Also found on functionally active T-cells as well as B-cells and thymic dendritic cells.

Its subcellular location is the cell membrane. Its function is as follows. GPI-anchored cell surface protein that regulates T-lymphocytes proliferation, differentiation, and activation. Regulates the T-cell receptor (TCR) signaling by interacting with component CD3Z/CD247 at the plasma membrane, leading to CD3Z/CD247 phosphorylation modulation. Restricts the entry of murine coronavirus, mouse hepatitis virus, by interfering with spike protein-mediated membrane fusion. Also plays an essential role in placenta formation by acting as the main receptor for syncytin-A (SynA). Therefore, participates in the normal fusion of syncytiotrophoblast layer I (SynT-I) and in the proper morphogenesis of both fetal and maternal vasculatures within the placenta. May also act as a modulator of nicotinic acetylcholine receptors (nAChRs) activity. In vitro inhibits alpha-3:beta-4-containing nAChRs maximum response. The chain is Lymphocyte antigen 6E from Mus musculus (Mouse).